The chain runs to 743 residues: Phosphoribosylformylglycinamidine synthase subunit PurL (743 aa).

His-53 is an active-site residue. 2 residues coordinate ATP: Tyr-56 and Lys-95. Residue Glu-97 coordinates Mg(2+). Substrate-binding positions include 98 to 101 (SHNH) and Arg-120. The active-site Proton acceptor is the His-99. Mg(2+) is bound at residue Asp-121. Gln-245 is a substrate binding site. Residue Asp-275 participates in Mg(2+) binding. Substrate is bound at residue 319–321 (ESQ). ATP is bound by residues Asp-502 and Gly-539. Asn-540 is a binding site for Mg(2+). Ser-542 contributes to the substrate binding site.

This sequence belongs to the FGAMS family. As to quaternary structure, monomer. Part of the FGAM synthase complex composed of 1 PurL, 1 PurQ and 2 PurS subunits.

The protein resides in the cytoplasm. The catalysed reaction is N(2)-formyl-N(1)-(5-phospho-beta-D-ribosyl)glycinamide + L-glutamine + ATP + H2O = 2-formamido-N(1)-(5-O-phospho-beta-D-ribosyl)acetamidine + L-glutamate + ADP + phosphate + H(+). The protein operates within purine metabolism; IMP biosynthesis via de novo pathway; 5-amino-1-(5-phospho-D-ribosyl)imidazole from N(2)-formyl-N(1)-(5-phospho-D-ribosyl)glycinamide: step 1/2. Functionally, part of the phosphoribosylformylglycinamidine synthase complex involved in the purines biosynthetic pathway. Catalyzes the ATP-dependent conversion of formylglycinamide ribonucleotide (FGAR) and glutamine to yield formylglycinamidine ribonucleotide (FGAM) and glutamate. The FGAM synthase complex is composed of three subunits. PurQ produces an ammonia molecule by converting glutamine to glutamate. PurL transfers the ammonia molecule to FGAR to form FGAM in an ATP-dependent manner. PurS interacts with PurQ and PurL and is thought to assist in the transfer of the ammonia molecule from PurQ to PurL. The chain is Phosphoribosylformylglycinamidine synthase subunit PurL from Lactobacillus helveticus (strain DPC 4571).